We begin with the raw amino-acid sequence, 371 residues long: MPHHYILTLFGLLPVATNISTWWNFGSMLLTCLALQVLTGFFLAIHYTANINLAFSSIIHITRDVPYGWMMQNLHAIGASMFFICIYIHIARGLYYGSYLNKETWMSGITLLITLMATAFFGYVLPWGQMSFWAATVITNLLTAVPYLGXSLTTWLWGGFAINDPTLTRFFALHFILPFAIISLSSLHIILLHEEGSSNPLGTNPDIDKIPFHPYHSHKDLLLLTFMILLLFTIVSFLPDIFNDPDNFSKANPLVTPQHIKPEWYFLFAYGILRSIPNKLGGALALVMSIMILFIIPFTHTARLRPMTFRPLSQLMFWTLVSTFATITWAATKPVEPPFIIISQTTSMLYFTFFLSTPILGWMENKMMNIS.

4 helical membrane passes run 25-45, 69-90, 105-125, and 170-190; these read FGSMLLTCLALQVLTGFFLAI, WMMQNLHAIGASMFFICIYIHI, WMSGITLLITLMATAFFGYVL, and FFALHFILPFAIISLSSLHII. Heme b-binding residues include histidine 75 and histidine 89. Residues histidine 174 and histidine 188 each contribute to the heme b site. Histidine 193 lines the a ubiquinone pocket. The next 4 helical transmembrane spans lie at 218–238, 280–300, 312–332, and 339–358; these read HKDLLLLTFMILLLFTIVSFL, LGGALALVMSIMILFIIPFTH, LSQLMFWTLVSTFATITWAAT, and FIIISQTTSMLYFTFFLSTP.

This sequence belongs to the cytochrome b family. In terms of assembly, the cytochrome bc1 complex contains 3 respiratory subunits (MT-CYB, CYC1 and UQCRFS1), 2 core proteins (UQCRC1 and UQCRC2) and probably 6 low-molecular weight proteins. Requires heme b as cofactor.

It is found in the mitochondrion inner membrane. Component of the ubiquinol-cytochrome c reductase complex (complex III or cytochrome b-c1 complex) that is part of the mitochondrial respiratory chain. The b-c1 complex mediates electron transfer from ubiquinol to cytochrome c. Contributes to the generation of a proton gradient across the mitochondrial membrane that is then used for ATP synthesis. The polypeptide is Cytochrome b (MT-CYB) (Antaresia maculosa (Eastern small blotched python)).